The primary structure comprises 314 residues: Cytochrome c biogenesis protein CcsA (314 aa).

A run of 8 helical transmembrane segments spans residues 15-35 (VSFIGILIFYFLLINLPISLI), 48-68 (LITILINLFIALQLISRWIIS), 73-93 (ISNLYESLYFLVWGITLGQLL), 102-122 (IIPAIAIPIELLTIAFACFVL), 148-168 (VMLSYAALIMGSLLSASVLFI), 216-236 (SILVGFVLLTLGLITGAIWAN), 250-267 (TWAFISWLFYAAYLHMRI), and 277-297 (ALLATSGFFVVLICYIGVNFL).

Belongs to the CcmF/CycK/Ccl1/NrfE/CcsA family. As to quaternary structure, may interact with ccs1.

The protein resides in the cellular thylakoid membrane. Required during biogenesis of c-type cytochromes (cytochrome c6 and cytochrome f) at the step of heme attachment. In Prochlorococcus marinus subsp. pastoris (strain CCMP1986 / NIES-2087 / MED4), this protein is Cytochrome c biogenesis protein CcsA.